Consider the following 128-residue polypeptide: Fluoride-specific ion channel FluC (128 aa).

4 consecutive transmembrane segments (helical) span residues 5 to 25 (LFIS…GLLF), 34 to 54 (FGTL…LGLF), 67 to 87 (FLIT…SEVV), and 99 to 119 (FCVL…GIWI). 2 residues coordinate Na(+): glycine 74 and threonine 77.

The protein belongs to the fluoride channel Fluc/FEX (TC 1.A.43) family.

Its subcellular location is the cell inner membrane. It carries out the reaction fluoride(in) = fluoride(out). Its activity is regulated as follows. Na(+) is not transported, but it plays an essential structural role and its presence is essential for fluoride channel function. Its function is as follows. Fluoride-specific ion channel. Important for reducing fluoride concentration in the cell, thus reducing its toxicity. The polypeptide is Fluoride-specific ion channel FluC (Haemophilus influenzae (strain PittGG)).